We begin with the raw amino-acid sequence, 780 residues long: Probable trehalase (780 aa).

Residues 1–48 form a disordered region; it reads MVDFLPKVTEINPPSEGNDGEDNIKPLSSGSEQRPLKEEGQQGGRRHH. Residues serine 52 and serine 53 each carry the phosphoserine modification. Residue threonine 88 is modified to Phosphothreonine. A Phosphoserine modification is found at serine 112. Substrate-binding positions include arginine 331, 338 to 339, asparagine 375, arginine 384, 384 to 386, and glycine 505; these read WD and RSQ. Catalysis depends on proton donor/acceptor residues aspartate 507 and glutamate 703.

The protein belongs to the glycosyl hydrolase 37 family.

The catalysed reaction is alpha,alpha-trehalose + H2O = alpha-D-glucose + beta-D-glucose. The protein is Probable trehalase (NTH2) of Saccharomyces cerevisiae (strain ATCC 204508 / S288c) (Baker's yeast).